We begin with the raw amino-acid sequence, 157 residues long: Ribosome maturation factor RimP (157 aa).

This sequence belongs to the RimP family.

It is found in the cytoplasm. Its function is as follows. Required for maturation of 30S ribosomal subunits. This chain is Ribosome maturation factor RimP, found in Synechococcus sp. (strain JA-3-3Ab) (Cyanobacteria bacterium Yellowstone A-Prime).